A 262-amino-acid polypeptide reads, in one-letter code: Type III pantothenate kinase (262 aa).

6-13 (DVGNTNTV) lines the ATP pocket. Substrate contacts are provided by residues Tyr101 and 108 to 111 (GADR). The active-site Proton acceptor is Asp110. Position 130 (Asp130) interacts with K(+). Thr133 lines the ATP pocket. Position 186 (Thr186) interacts with substrate.

Belongs to the type III pantothenate kinase family. As to quaternary structure, homodimer. NH4(+) serves as cofactor. K(+) is required as a cofactor.

The protein localises to the cytoplasm. It carries out the reaction (R)-pantothenate + ATP = (R)-4'-phosphopantothenate + ADP + H(+). It functions in the pathway cofactor biosynthesis; coenzyme A biosynthesis; CoA from (R)-pantothenate: step 1/5. Functionally, catalyzes the phosphorylation of pantothenate (Pan), the first step in CoA biosynthesis. The protein is Type III pantothenate kinase of Desulforapulum autotrophicum (strain ATCC 43914 / DSM 3382 / VKM B-1955 / HRM2) (Desulfobacterium autotrophicum).